The primary structure comprises 388 residues: Processive diacylglycerol beta-glucosyltransferase (388 aa).

This sequence belongs to the glycosyltransferase 28 family. UgtP subfamily.

The protein localises to the cell membrane. The catalysed reaction is a 1,2-diacyl-3-O-(beta-D-glucopyranosyl)-sn-glycerol + UDP-alpha-D-glucose = a 1,2-diacyl-3-O-(beta-D-Glc-(1-&gt;6)-beta-D-Glc)-sn-glycerol + UDP + H(+). It carries out the reaction a 1,2-diacyl-3-O-(beta-D-Glc-(1-&gt;6)-beta-D-Glc)-sn-glycerol + UDP-alpha-D-glucose = a 1,2-diacyl-3-O-(beta-D-Glc-(1-&gt;6)-beta-D-Glc-(1-&gt;6)-beta-D-Glc)-sn-glycerol + UDP + H(+). It catalyses the reaction a 1,2-diacyl-sn-glycerol + UDP-alpha-D-glucose = a 1,2-diacyl-3-O-(beta-D-glucopyranosyl)-sn-glycerol + UDP + H(+). The protein operates within glycolipid metabolism; diglucosyl-diacylglycerol biosynthesis. Its function is as follows. Processive glucosyltransferase involved in the biosynthesis of both the bilayer- and non-bilayer-forming membrane glucolipids. Is able to successively transfer up to three glucosyl residues to diacylglycerol (DAG), thereby catalyzing the formation of beta-monoglucosyl-DAG (3-O-(beta-D-glucopyranosyl)-1,2-diacyl-sn-glycerol), beta-diglucosyl-DAG (3-O-(beta-D-glucopyranosyl-beta-(1-&gt;6)-D-glucopyranosyl)-1,2-diacyl-sn-glycerol) and beta-triglucosyl-DAG (3-O-(beta-D-glucopyranosyl-beta-(1-&gt;6)-D-glucopyranosyl-beta-(1-&gt;6)-D-glucopyranosyl)-1,2-diacyl-sn-glycerol). Beta-diglucosyl-DAG is the predominant glycolipid found in Bacillales and is also used as a membrane anchor for lipoteichoic acid (LTA). This chain is Processive diacylglycerol beta-glucosyltransferase, found in Bacillus cereus (strain AH187).